The chain runs to 182 residues: NADH-quinone oxidoreductase subunit B (182 aa).

Residues Cys47, Cys48, Cys113, and Cys142 each coordinate [4Fe-4S] cluster.

This sequence belongs to the complex I 20 kDa subunit family. In terms of assembly, NDH-1 is composed of 14 different subunits. Subunits NuoB, C, D, E, F, and G constitute the peripheral sector of the complex. It depends on [4Fe-4S] cluster as a cofactor.

It localises to the cell inner membrane. It carries out the reaction a quinone + NADH + 5 H(+)(in) = a quinol + NAD(+) + 4 H(+)(out). Its function is as follows. NDH-1 shuttles electrons from NADH, via FMN and iron-sulfur (Fe-S) centers, to quinones in the respiratory chain. The immediate electron acceptor for the enzyme in this species is believed to be ubiquinone. Couples the redox reaction to proton translocation (for every two electrons transferred, four hydrogen ions are translocated across the cytoplasmic membrane), and thus conserves the redox energy in a proton gradient. The protein is NADH-quinone oxidoreductase subunit B of Anaeromyxobacter dehalogenans (strain 2CP-1 / ATCC BAA-258).